The following is a 366-amino-acid chain: ATP-dependent 6-phosphofructokinase 2 (366 aa).

ATP contacts are provided by residues Gly-15, 78 to 79, and 119 to 122; these read KD and GDGT. Asp-120 is a binding site for Mg(2+). Residues 142 to 144, Arg-179, 186 to 188, Glu-239, Arg-284, and 290 to 293 contribute to the substrate site; these read TID, MGR, and HIQR. Residue Asp-144 is the Proton acceptor of the active site.

The protein belongs to the phosphofructokinase type A (PFKA) family. Mixed-substrate PFK group III subfamily. Homodimer or homotetramer. Mg(2+) serves as cofactor.

It is found in the cytoplasm. The enzyme catalyses beta-D-fructose 6-phosphate + ATP = beta-D-fructose 1,6-bisphosphate + ADP + H(+). Its pathway is carbohydrate degradation; glycolysis; D-glyceraldehyde 3-phosphate and glycerone phosphate from D-glucose: step 3/4. With respect to regulation, subject to allosteric activation by ADP and other diphosphonucleosides, and inhibition by phosphoenolpyruvate. Catalyzes the phosphorylation of D-fructose 6-phosphate to fructose 1,6-bisphosphate by ATP, the first committing step of glycolysis. This chain is ATP-dependent 6-phosphofructokinase 2, found in Clostridium perfringens (strain 13 / Type A).